A 508-amino-acid polypeptide reads, in one-letter code: MLWFQGAIPAAIATAKRSGAVFVVFVAGDDEQSTQMAASWEDDKVTEASSNSFVAIKIDTKSEACLQFSQIYPVVCVPSSFFIGDSGIPLEVIAGSVSADELVTRIHKVRQMHLLKSETSVANGSQSESSVSTPSASFEPNNTCENSQSRNAELCEIPPTSDTKSDTATGGESAGHATSSQEPSGCSDQRPAEDLNIRVERLTKKLEERREEKRKEEEQREIKKEIERRKTGKEMLDYKRKQEEELTKRMLEERNREKAEDRAARERIKQQIALDRAERAARFAKTKEEVEAAKAAALLAKQAEMEVKRESYARERSTVARIQFRLPDGSSFTNQFPSDAPLEEARQFAAQTVGNTYGNFSLATMFPRREFTKEDYKKKLLDLELAPSASVVVLPAGRPTASIVHSSSGDIWTLLGTVLYPFLAIWRLISNFLFSNPPPTQTSVRVTSSEPPNPASSSKSEKREPVRKRVLEKRGDDFKKEGKIYRLRTQDDGEDENNTWNGNSTQQM.

The tract at residues methionine 1–glutamate 200 is interaction with UBQLN1. At methionine 1–threonine 413 the chain is on the cytoplasmic side. Polar residues-rich tracts occupy residues serine 117–asparagine 151 and threonine 160–serine 187. Positions serine 117 to asparagine 196 are disordered. In terms of domain architecture, UBX spans glutamate 315–valine 393. An intramembrane segment occupies leucine 414–phenylalanine 434. Residues serine 435–methionine 508 lie on the Cytoplasmic side of the membrane. Residues threonine 440–methionine 508 are disordered. The span at glutamine 441 to serine 458 shows a compositional bias: polar residues. Residues lysine 459–aspartate 491 are compositionally biased toward basic and acidic residues. Position 489 is a phosphothreonine (threonine 489). The span at asparagine 498 to methionine 508 shows a compositional bias: polar residues.

Directly interacts with VCP. Interacts with UBQLN1. Forms a complex with VCP and UBQLN1.

It is found in the endoplasmic reticulum membrane. Its subcellular location is the nucleus envelope. Involved in endoplasmic reticulum-associated protein degradation (ERAD). Acts as a platform to recruit both UBQLN1 and VCP to the ER during ERAD. This chain is UBX domain-containing protein 4 (UBXN4), found in Pongo abelii (Sumatran orangutan).